The primary structure comprises 170 residues: M-agglutinin (170 aa).

The signal sequence occupies residues 1–24; the sequence is MNLKKIAIASSVFAGITMALTCHA.

This protein is a non-fimbrial hemagglutinin that is specific for blood group M. This Escherichia coli protein is M-agglutinin (bmaE).